Here is a 370-residue protein sequence, read N- to C-terminus: Chaperone protein DnaJ (370 aa).

The region spanning 6–70 (DYYEVLGVQR…EKRSMYDRFG (65 aa)) is the J domain. The CR-type zinc finger occupies 128–208 (GVEKTIEYRR…CRGEGRIRQT (81 aa)). Residues Cys-141, Cys-144, Cys-158, Cys-161, Cys-182, Cys-185, Cys-196, and Cys-199 each contribute to the Zn(2+) site. 4 CXXCXGXG motif repeats span residues 141-148 (CPACRGSG), 158-165 (CPKCGGLG), 182-189 (CDMCRGEG), and 196-203 (CRECRGEG).

The protein belongs to the DnaJ family. In terms of assembly, homodimer. Zn(2+) is required as a cofactor.

Its subcellular location is the cytoplasm. Participates actively in the response to hyperosmotic and heat shock by preventing the aggregation of stress-denatured proteins and by disaggregating proteins, also in an autonomous, DnaK-independent fashion. Unfolded proteins bind initially to DnaJ; upon interaction with the DnaJ-bound protein, DnaK hydrolyzes its bound ATP, resulting in the formation of a stable complex. GrpE releases ADP from DnaK; ATP binding to DnaK triggers the release of the substrate protein, thus completing the reaction cycle. Several rounds of ATP-dependent interactions between DnaJ, DnaK and GrpE are required for fully efficient folding. Also involved, together with DnaK and GrpE, in the DNA replication of plasmids through activation of initiation proteins. The chain is Chaperone protein DnaJ from Roseiflexus castenholzii (strain DSM 13941 / HLO8).